The chain runs to 133 residues: MGMTSDSIADLLTRIRNALMAEHLYVDVEHSKMREAIVKILKHKGFVAHYLVKEENRKRAMRVFLQYSDDRKPVIHQLKRVSKPSRRVYVSAAKIPYVFGNMGISVLSTSQGVMEGSLARSKNIGGELLCLVW.

This sequence belongs to the universal ribosomal protein uS8 family. As to quaternary structure, part of the 30S ribosomal subunit. Contacts proteins S5 and S12.

Its function is as follows. One of the primary rRNA binding proteins, it binds directly to 16S rRNA central domain where it helps coordinate assembly of the platform of the 30S subunit. The sequence is that of Small ribosomal subunit protein uS8 from Chlamydia pneumoniae (Chlamydophila pneumoniae).